The primary structure comprises 305 residues: UDP-3-O-acyl-N-acetylglucosamine deacetylase (305 aa).

Zn(2+) is bound by residues His-79, His-238, and Asp-242. Residue His-265 is the Proton donor of the active site.

The protein belongs to the LpxC family. Zn(2+) is required as a cofactor.

It catalyses the reaction a UDP-3-O-[(3R)-3-hydroxyacyl]-N-acetyl-alpha-D-glucosamine + H2O = a UDP-3-O-[(3R)-3-hydroxyacyl]-alpha-D-glucosamine + acetate. Its pathway is glycolipid biosynthesis; lipid IV(A) biosynthesis; lipid IV(A) from (3R)-3-hydroxytetradecanoyl-[acyl-carrier-protein] and UDP-N-acetyl-alpha-D-glucosamine: step 2/6. Its function is as follows. Catalyzes the hydrolysis of UDP-3-O-myristoyl-N-acetylglucosamine to form UDP-3-O-myristoylglucosamine and acetate, the committed step in lipid A biosynthesis. This Haemophilus influenzae (strain PittEE) protein is UDP-3-O-acyl-N-acetylglucosamine deacetylase.